The following is a 298-amino-acid chain: Max-like protein X (298 aa).

Positions 1–63 (MTEPGASPED…ARGCREDSSH (63 aa)) are disordered. At Ser-7 the chain carries Phosphoserine. Over residues 28-37 (GRARARRGSG) the composition is skewed to basic residues. Ser-45, Ser-48, Ser-74, Ser-77, and Ser-98 each carry phosphoserine. The span at 98–109 (SIGSTSASSVPN) shows a compositional bias: polar residues. Residues 98 to 119 (SIGSTSASSVPNTDDEDSDYQQ) form a disordered region. One can recognise a bHLH domain in the interval 129–187 (RRRRAHTQAEQKRRDAIKRGYDDLQTIVPTCQQQDFSIGSQKLSKAIVLQKTIDYIQFL). Residues 194 to 214 (QEEEVSTLRKDVTALKIMKVN) are leucine-zipper.

As to quaternary structure, efficient DNA binding requires dimerization with another bHLH protein. Binds DNA as a heterodimer with MAD1, MAD4, MNT, WBSCR14 and MLXIP. Can also bind DNA as a homodimer. As to expression, expressed in all tissues examined: stomach, duodenum, jejunum, ileum, colon, liver, pancreas, salivary gland, kidney, spleen, lung, heart, skeletal muscle, brain, ovary and testis.

The protein resides in the cytoplasm. It localises to the nucleus. In terms of biological role, transcription regulator. Forms a sequence-specific DNA-binding protein complex with MAD1, MAD4, MNT, WBSCR14 and MLXIP which recognizes the core sequence 5'-CACGTG-3'. The TCFL4-MAD1, TCFL4-MAD4, TCFL4-WBSCR14 complexes are transcriptional repressors. Plays a role in transcriptional activation of glycolytic target genes. Involved in glucose-responsive gene regulation. This chain is Max-like protein X (Mlx), found in Mus musculus (Mouse).